A 339-amino-acid chain; its full sequence is Anthranilate phosphoribosyltransferase (339 aa).

Residues G79, 82–83 (GD), T87, 89–92 (NVST), 107–115 (KHGNRSVSS), and S119 contribute to the 5-phospho-alpha-D-ribose 1-diphosphate site. G79 provides a ligand contact to anthranilate. S91 contributes to the Mg(2+) binding site. Residue N110 participates in anthranilate binding. R165 provides a ligand contact to anthranilate. Residues D224 and E225 each coordinate Mg(2+).

Belongs to the anthranilate phosphoribosyltransferase family. Homodimer. The cofactor is Mg(2+).

The catalysed reaction is N-(5-phospho-beta-D-ribosyl)anthranilate + diphosphate = 5-phospho-alpha-D-ribose 1-diphosphate + anthranilate. It participates in amino-acid biosynthesis; L-tryptophan biosynthesis; L-tryptophan from chorismate: step 2/5. Catalyzes the transfer of the phosphoribosyl group of 5-phosphorylribose-1-pyrophosphate (PRPP) to anthranilate to yield N-(5'-phosphoribosyl)-anthranilate (PRA). This chain is Anthranilate phosphoribosyltransferase, found in Caldivirga maquilingensis (strain ATCC 700844 / DSM 13496 / JCM 10307 / IC-167).